The primary structure comprises 59 residues: Protein translocase subunit SecE (59 aa).

A helical membrane pass occupies residues 37–57 (GIGIIIIGVIGFIISIIAQLL).

This sequence belongs to the SecE/SEC61-gamma family. Component of the Sec protein translocase complex. Heterotrimer consisting of SecY (alpha), SecG (beta) and SecE (gamma) subunits. The heterotrimers can form oligomers, although 1 heterotrimer is thought to be able to translocate proteins. Interacts with the ribosome. May interact with SecDF, and other proteins may be involved.

The protein resides in the cell membrane. In terms of biological role, essential subunit of the Sec protein translocation channel SecYEG. Clamps together the 2 halves of SecY. May contact the channel plug during translocation. This Methanothermobacter thermautotrophicus (strain ATCC 29096 / DSM 1053 / JCM 10044 / NBRC 100330 / Delta H) (Methanobacterium thermoautotrophicum) protein is Protein translocase subunit SecE.